The chain runs to 324 residues: NAC domain-containing protein 21/22 (324 aa).

In terms of domain architecture, NAC spans 19-171; the sequence is LPPGFRFHPK…DWVLCRVFHK (153 aa). The short motif at 120-137 is the Bipartite nuclear localization signal element; it reads RKTLVFYQGRAPRGRKTD.

In terms of assembly, dimer. Interacts with SINAT5. Ubiquitinated. The interaction with SINAT5 mediate its proteasome-dependent degradation. In terms of tissue distribution, predominantly expressed in the root tip and in lateral root initiation sites. Also detected in expanding cotyledon, and in leaf primordia.

The protein localises to the nucleus. Its function is as follows. Transcriptional activator that mediates auxin signaling to promote lateral root development. Activates the expression of two downstream auxin-responsive genes, DBP and AIR3. The polypeptide is NAC domain-containing protein 21/22 (NAC021) (Arabidopsis thaliana (Mouse-ear cress)).